Here is a 208-residue protein sequence, read N- to C-terminus: NAD(P)H-quinone oxidoreductase subunit I (208 aa).

2 4Fe-4S ferredoxin-type domains span residues 55-84 and 95-124; these read GRIH…VDWV and RNYS…MTEE. Residues Cys64, Cys67, Cys70, Cys74, Cys104, Cys107, Cys110, and Cys114 each contribute to the [4Fe-4S] cluster site.

It belongs to the complex I 23 kDa subunit family. NDH-1 is composed of at least 11 different subunits. It depends on [4Fe-4S] cluster as a cofactor.

It localises to the cellular thylakoid membrane. The enzyme catalyses a plastoquinone + NADH + (n+1) H(+)(in) = a plastoquinol + NAD(+) + n H(+)(out). It carries out the reaction a plastoquinone + NADPH + (n+1) H(+)(in) = a plastoquinol + NADP(+) + n H(+)(out). In terms of biological role, NDH-1 shuttles electrons from an unknown electron donor, via FMN and iron-sulfur (Fe-S) centers, to quinones in the respiratory and/or the photosynthetic chain. The immediate electron acceptor for the enzyme in this species is believed to be plastoquinone. Couples the redox reaction to proton translocation, and thus conserves the redox energy in a proton gradient. The chain is NAD(P)H-quinone oxidoreductase subunit I from Prochlorococcus marinus (strain MIT 9312).